Here is a 417-residue protein sequence, read N- to C-terminus: Serine hydroxymethyltransferase (417 aa).

(6S)-5,6,7,8-tetrahydrofolate-binding positions include L121 and 125–127 (GHL). K229 carries the N6-(pyridoxal phosphate)lysine modification. 355–357 (SPF) provides a ligand contact to (6S)-5,6,7,8-tetrahydrofolate.

The protein belongs to the SHMT family. As to quaternary structure, homodimer. Pyridoxal 5'-phosphate serves as cofactor.

Its subcellular location is the cytoplasm. The catalysed reaction is (6R)-5,10-methylene-5,6,7,8-tetrahydrofolate + glycine + H2O = (6S)-5,6,7,8-tetrahydrofolate + L-serine. It functions in the pathway one-carbon metabolism; tetrahydrofolate interconversion. The protein operates within amino-acid biosynthesis; glycine biosynthesis; glycine from L-serine: step 1/1. Catalyzes the reversible interconversion of serine and glycine with tetrahydrofolate (THF) serving as the one-carbon carrier. This reaction serves as the major source of one-carbon groups required for the biosynthesis of purines, thymidylate, methionine, and other important biomolecules. Also exhibits THF-independent aldolase activity toward beta-hydroxyamino acids, producing glycine and aldehydes, via a retro-aldol mechanism. The sequence is that of Serine hydroxymethyltransferase from Shewanella sp. (strain MR-4).